The sequence spans 959 residues: Isoleucine--tRNA ligase (959 aa).

The 'HIGH' region signature appears at Pro-60–His-70. Glu-569 serves as a coordination point for L-isoleucyl-5'-AMP. Residues Lys-610–Ser-614 carry the 'KMSKS' region motif. Lys-613 serves as a coordination point for ATP. Positions 928, 931, 948, and 951 each coordinate Zn(2+).

Belongs to the class-I aminoacyl-tRNA synthetase family. IleS type 1 subfamily. In terms of assembly, monomer. It depends on Zn(2+) as a cofactor.

The protein resides in the cytoplasm. The enzyme catalyses tRNA(Ile) + L-isoleucine + ATP = L-isoleucyl-tRNA(Ile) + AMP + diphosphate. In terms of biological role, catalyzes the attachment of isoleucine to tRNA(Ile). As IleRS can inadvertently accommodate and process structurally similar amino acids such as valine, to avoid such errors it has two additional distinct tRNA(Ile)-dependent editing activities. One activity is designated as 'pretransfer' editing and involves the hydrolysis of activated Val-AMP. The other activity is designated 'posttransfer' editing and involves deacylation of mischarged Val-tRNA(Ile). The sequence is that of Isoleucine--tRNA ligase from Rippkaea orientalis (strain PCC 8801 / RF-1) (Cyanothece sp. (strain PCC 8801)).